A 509-amino-acid chain; its full sequence is 2,3-bisphosphoglycerate-independent phosphoglycerate mutase (509 aa).

Residue D11 coordinates Mn(2+). Phosphotyrosine is present on Y35. Mn(2+) is bound at residue S61. Residue S61 is the Phosphoserine intermediate of the active site. Substrate contacts are provided by residues H122, 152-153 (RD), R184, R190, 260-263 (RPDR), and K335. Mn(2+)-binding residues include D402, H406, D443, H444, and H461.

This sequence belongs to the BPG-independent phosphoglycerate mutase family. In terms of assembly, monomer. The cofactor is Mn(2+).

The catalysed reaction is (2R)-2-phosphoglycerate = (2R)-3-phosphoglycerate. Its pathway is carbohydrate degradation; glycolysis; pyruvate from D-glyceraldehyde 3-phosphate: step 3/5. Functionally, essential for rapid growth and for sporulation. Catalyzes the interconversion of 2-phosphoglycerate and 3-phosphoglycerate. The polypeptide is 2,3-bisphosphoglycerate-independent phosphoglycerate mutase (Bacillus thuringiensis (strain Al Hakam)).